Here is a 787-residue protein sequence, read N- to C-terminus: Disease resistance protein ADR1 (787 aa).

In terms of domain architecture, RPW8 spans 1–149 (MASFIDLFAG…LLTERNDSLS (149 aa)). The stretch at 96–112 (HANKMKDLEKQISRFLN) forms a coiled coil. Residue 193–200 (GMSGSGKT) participates in ATP binding. One can recognise an NB-ARC domain in the interval 247-414 (HQRKLVILDD…PLDLLTSVWV (168 aa)). LRR repeat units lie at residues 549 to 575 (MSRLRVLVIINNGMSPARLHGFSIFAN), 576 to 599 (LAKLRSLWLKRVHVPELTSCTIPL), 650 to 674 (ITSLNSLSITNCPRILELPKNLSNV), and 722 to 745 (LGSLEKIDMRECSLLGLPSSVAAL).

Belongs to the disease resistance NB-LRR family.

In terms of biological role, disease resistance (R) protein that mediates resistance against Hyaloperonospora parasitica in a salicylic acid-dependent manner. Also mediates resistance against Erysiphe cichoracearum is both salicylic acid-dependent and partially NPR1-dependent. Resistance proteins guard the plant against pathogens that contain an appropriate avirulence protein via an indirect interaction with this avirulence protein. That triggers a defense system including the hypersensitive response, which restricts the pathogen growth. This is Disease resistance protein ADR1 (ADR1) from Arabidopsis thaliana (Mouse-ear cress).